The following is an 872-amino-acid chain: Alanine--tRNA ligase (872 aa).

The Zn(2+) site is built by His-567, His-571, Cys-669, and His-673.

Belongs to the class-II aminoacyl-tRNA synthetase family. It depends on Zn(2+) as a cofactor.

It is found in the cytoplasm. It catalyses the reaction tRNA(Ala) + L-alanine + ATP = L-alanyl-tRNA(Ala) + AMP + diphosphate. Functionally, catalyzes the attachment of alanine to tRNA(Ala) in a two-step reaction: alanine is first activated by ATP to form Ala-AMP and then transferred to the acceptor end of tRNA(Ala). Also edits incorrectly charged Ser-tRNA(Ala) and Gly-tRNA(Ala) via its editing domain. The sequence is that of Alanine--tRNA ligase from Streptococcus pneumoniae (strain CGSP14).